A 258-amino-acid polypeptide reads, in one-letter code: MLEQILATKREELDTLTLPEPLPEPKRRPFAAALRRPRRALGLIAEVKKASPSKGIIRPDFDPVAIAKAYERAGADAISVLTDERYFQGHRRYLQEVKEAVNIPVLRKDFIIDRRQVEESARLGADAILLIGEALSPEMLEALYQEAYSIGLECLVEVHAKETLERILARFTPEVVGINNRDLHTFVTTLEATKALASLIPPSSVIVSESGISSYRDVRTIRSYGVQAMLVGESLMRQADVERAVYRLFGEDDGNGSS.

Belongs to the TrpC family.

It carries out the reaction 1-(2-carboxyphenylamino)-1-deoxy-D-ribulose 5-phosphate + H(+) = (1S,2R)-1-C-(indol-3-yl)glycerol 3-phosphate + CO2 + H2O. Its pathway is amino-acid biosynthesis; L-tryptophan biosynthesis; L-tryptophan from chorismate: step 4/5. This is Indole-3-glycerol phosphate synthase from Geobacillus thermodenitrificans (strain NG80-2).